A 289-amino-acid chain; its full sequence is Poly-beta-1,6-N-acetyl-D-glucosamine N-deacetylase (289 aa).

Residues 1–30 form the signal peptide; that stretch reads MKPFKLIFISALMILIMTNATPISHLNAQA. A NodB homology domain is found at 113 to 289; sequence RSVWINFDDM…KEWDGFDEEK (177 aa).

This sequence belongs to the polysaccharide deacetylase family.

Its subcellular location is the secreted. The protein resides in the cell wall. Catalyzes the N-deacetylation of poly-beta-1,6-N-acetyl-D-glucosamine (PNAG, also referred to as PIA), a biofilm adhesin polysaccharide. In fact, the IcaB deacetylase converts 15 to 20% of the GlcNAc residues of PNAG to glucosamine. N-deacetylation is crucial for attachment of the polysaccharide to the bacterial cell surface; it leads to the introduction of positive charges in the otherwise neutral PIA polymer, allowing electrostatic interactions. Deacetylation of the polymer is also essential for key virulence mechanisms of S.epidermidis, namely biofilm formation, colonization, and resistance to neutrophil phagocytosis and human antibacterial peptides. The sequence is that of Poly-beta-1,6-N-acetyl-D-glucosamine N-deacetylase (icaB) from Staphylococcus epidermidis (strain ATCC 35984 / DSM 28319 / BCRC 17069 / CCUG 31568 / BM 3577 / RP62A).